The primary structure comprises 75 residues: Small ribosomal subunit protein bS18 (75 aa).

Belongs to the bacterial ribosomal protein bS18 family. As to quaternary structure, part of the 30S ribosomal subunit. Forms a tight heterodimer with protein bS6.

Its function is as follows. Binds as a heterodimer with protein bS6 to the central domain of the 16S rRNA, where it helps stabilize the platform of the 30S subunit. This chain is Small ribosomal subunit protein bS18, found in Saccharophagus degradans (strain 2-40 / ATCC 43961 / DSM 17024).